The following is a 150-amino-acid chain: 6,7-dimethyl-8-ribityllumazine synthase (150 aa).

5-amino-6-(D-ribitylamino)uracil is bound by residues F11, V43–D45, and A67–I69. A72–T73 contacts (2S)-2-hydroxy-3-oxobutyl phosphate. The active-site Proton donor is the H75. L100 lines the 5-amino-6-(D-ribitylamino)uracil pocket. R115 serves as a coordination point for (2S)-2-hydroxy-3-oxobutyl phosphate.

It belongs to the DMRL synthase family.

The catalysed reaction is (2S)-2-hydroxy-3-oxobutyl phosphate + 5-amino-6-(D-ribitylamino)uracil = 6,7-dimethyl-8-(1-D-ribityl)lumazine + phosphate + 2 H2O + H(+). It functions in the pathway cofactor biosynthesis; riboflavin biosynthesis; riboflavin from 2-hydroxy-3-oxobutyl phosphate and 5-amino-6-(D-ribitylamino)uracil: step 1/2. In terms of biological role, catalyzes the formation of 6,7-dimethyl-8-ribityllumazine by condensation of 5-amino-6-(D-ribitylamino)uracil with 3,4-dihydroxy-2-butanone 4-phosphate. This is the penultimate step in the biosynthesis of riboflavin. This Pyrobaculum aerophilum (strain ATCC 51768 / DSM 7523 / JCM 9630 / CIP 104966 / NBRC 100827 / IM2) protein is 6,7-dimethyl-8-ribityllumazine synthase.